The primary structure comprises 71 residues: Mitotic-spindle organizing protein 1 (71 aa).

Belongs to the MOZART1 family. As to quaternary structure, part of the gamma-tubulin complex.

The protein resides in the cytoplasm. The protein localises to the cytoskeleton. It is found in the microtubule organizing center. It localises to the spindle pole body. Its function is as follows. Required for gamma-tubulin complex recruitment to the microtubule organizing center (MTOC). This chain is Mitotic-spindle organizing protein 1, found in Aspergillus clavatus (strain ATCC 1007 / CBS 513.65 / DSM 816 / NCTC 3887 / NRRL 1 / QM 1276 / 107).